The primary structure comprises 238 residues: Dolichyldiphosphatase 1 (238 aa).

A run of 4 helical transmembrane segments spans residues 33–53, 100–120, 130–150, and 162–182; these read LAYL…LIIF, PSSH…FLYL, FLDL…AFLV, and WSQV…WFIF.

This sequence belongs to the dolichyldiphosphatase family.

It localises to the endoplasmic reticulum membrane. The catalysed reaction is a di-trans,poly-cis-dolichyl diphosphate + H2O = a di-trans,poly-cis-dolichyl phosphate + phosphate + H(+). It participates in protein modification; protein glycosylation. Required for efficient N-glycosylation. Necessary for maintaining optimal levels of dolichol-linked oligosaccharides. Hydrolyzes dolichyl pyrophosphate at a very high rate and dolichyl monophosphate at a much lower rate. Does not act on phosphatidate. The protein is Dolichyldiphosphatase 1 (DOLPP1) of Plecturocebus moloch (Dusky titi monkey).